We begin with the raw amino-acid sequence, 198 residues long: NADH-quinone oxidoreductase subunit B (198 aa).

Positions 62, 63, 128, and 158 each coordinate [4Fe-4S] cluster.

This sequence belongs to the complex I 20 kDa subunit family. As to quaternary structure, NDH-1 is composed of 14 different subunits. Subunits NuoB, C, D, E, F, and G constitute the peripheral sector of the complex. It depends on [4Fe-4S] cluster as a cofactor.

It is found in the cell inner membrane. It carries out the reaction a quinone + NADH + 5 H(+)(in) = a quinol + NAD(+) + 4 H(+)(out). In terms of biological role, NDH-1 shuttles electrons from NADH, via FMN and iron-sulfur (Fe-S) centers, to quinones in the respiratory chain. The immediate electron acceptor for the enzyme in this species is believed to be a menaquinone. Couples the redox reaction to proton translocation (for every two electrons transferred, four hydrogen ions are translocated across the cytoplasmic membrane), and thus conserves the redox energy in a proton gradient. The protein is NADH-quinone oxidoreductase subunit B of Phocaeicola vulgatus (strain ATCC 8482 / DSM 1447 / JCM 5826 / CCUG 4940 / NBRC 14291 / NCTC 11154) (Bacteroides vulgatus).